A 1276-amino-acid polypeptide reads, in one-letter code: Histone-lysine N-methyltransferase PRDM16 (1276 aa).

Positions 1–10 (MRSKARARKL) are enriched in basic residues. Residues 1–68 (MRSKARARKL…DFTPKEGSPY (68 aa)) form a disordered region. Positions 82 to 211 (ADFELRESSI…PGEELLVHVK (130 aa)) constitute an SET domain. The segment at 230 to 253 (FRCDECDELFQSKLDLRRHKKYTC) adopts a C2H2-type 1; atypical zinc-finger fold. 5 C2H2-type zinc fingers span residues 281 to 303 (HECK…MVIH), 309 to 331 (YKCD…QMSH), 337 to 360 (FECE…RSQH), 366 to 388 (HACP…KHIH), and 394 to 416 (FICE…KRMH). The C2H2-type 7; atypical zinc finger occupies 423–445 (IKCKDCGQMFSTTSSLNKHRRFC). Disordered stretches follow at residues 533–657 (SLLK…APPG) and 772–804 (PFDL…QPLD). The segment covering 561–570 (AVSNSSQGTT) has biased composition (polar residues). Residues 575-597 (PEEKFESRLEDSCVEKLKTRSSD) are compositionally biased toward basic and acidic residues. Over residues 609-624 (TTTGTDLDTTTGTGSD) the composition is skewed to low complexity. Residues 632 to 642 (DPDKDKGKGKS) are compositionally biased toward basic and acidic residues. The segment at 679 to 1038 (DEQLLTATGA…KHEHENAPVS (360 aa)) is interaction with CTBP1, CTBP2 and ZNF516. Residues 739–1276 (PFTDRALAHN…SGAFHPINHL (538 aa)) form a mediates interaction with SKI and regulation of TGF-beta signaling region. 3 consecutive C2H2-type zinc fingers follow at residues 951-973 (YTCR…LRTH), 979-1002 (YRCK…RNIH), and 1008-1032 (FKCH…KHEH). 2 disordered regions span residues 1033-1065 (ENAP…HALL) and 1105-1163 (AQCP…EPAA). Positions 1047 to 1058 (HLGTSASSPTSE) are enriched in polar residues. The span at 1116-1133 (EDVEEEDDDDLEEDDEDS) shows a compositional bias: acidic residues.

Belongs to the PRDM16 family. Interacts with CEBPA, CEBPB and CEBPD; the interaction is direct. Interacts with PPARG and PPARA; controls brown adipocytes differentiation. Interacts with CTBP1 and CTBP2; represses the expression of WAT-specific genes. Interacts with PPARGC1A and PPARGC1B; interaction with PPARGC1A or PPARGC1B activates the transcription of BAT-specific gene. Interacts with HDAC1, SKI, SMAD2 and SMAD3; the interaction with SKI promotes the recruitment of SMAD3-HDAC1 complex on the promoter of TGF-beta target genes. Interacts with ZNF516; the interaction is direct and may play a role in the transcription of brown adipose tissue-specific gene. As to expression, expressed in uterus and kidney. Expressed in both cardiomyocytes and interstitial cells.

It is found in the nucleus. It localises to the cytoplasm. It catalyses the reaction L-lysyl(9)-[histone H3] + S-adenosyl-L-methionine = N(6)-methyl-L-lysyl(9)-[histone H3] + S-adenosyl-L-homocysteine + H(+). Binds DNA and functions as a transcriptional regulator. Displays histone methyltransferase activity and monomethylates 'Lys-9' of histone H3 (H3K9me1) in vitro. Probably catalyzes the monomethylation of free histone H3 in the cytoplasm which is then transported to the nucleus and incorporated into nucleosomes where SUV39H methyltransferases use it as a substrate to catalyze histone H3 'Lys-9' trimethylation. Likely to be one of the primary histone methyltransferases along with MECOM/PRDM3 that direct cytoplasmic H3K9me1 methylation. Functions in the differentiation of brown adipose tissue (BAT) which is specialized in dissipating chemical energy in the form of heat in response to cold or excess feeding while white adipose tissue (WAT) is specialized in the storage of excess energy and the control of systemic metabolism. Together with CEBPB, regulates the differentiation of myoblastic precursors into brown adipose cells. Functions as a repressor of TGF-beta signaling. Functionally, binds DNA and functions as a transcriptional regulator. Functions as a repressor of TGF-beta signaling. May regulate granulocyte differentiation. In Homo sapiens (Human), this protein is Histone-lysine N-methyltransferase PRDM16.